The chain runs to 780 residues: Lon protease (780 aa).

The 194-residue stretch at 11 to 204 (IPVLPLRDVV…RLMAIMESEI (194 aa)) folds into the Lon N-terminal domain. 356-363 (GPPGVGKT) is a binding site for ATP. In terms of domain architecture, Lon proteolytic spans 592–773 (KNQIGQVIGL…KEVLNLSLEN (182 aa)). Catalysis depends on residues S679 and K722.

It belongs to the peptidase S16 family. Homohexamer. Organized in a ring with a central cavity.

Its subcellular location is the cytoplasm. The catalysed reaction is Hydrolysis of proteins in presence of ATP.. Functionally, ATP-dependent serine protease that mediates the selective degradation of mutant and abnormal proteins as well as certain short-lived regulatory proteins. Required for cellular homeostasis and for survival from DNA damage and developmental changes induced by stress. Degrades polypeptides processively to yield small peptide fragments that are 5 to 10 amino acids long. Binds to DNA in a double-stranded, site-specific manner. The chain is Lon protease from Buchnera aphidicola subsp. Baizongia pistaciae (strain Bp).